A 1478-amino-acid chain; its full sequence is Zinc finger protein 518A (1478 aa).

C2H2-type zinc fingers lie at residues 152 to 174 (FPCE…RKTH), 209 to 231 (FQCE…IHRH), 236 to 258 (YKCG…LRVH), and 264 to 287 (FTCH…ITLH). Residues 355 to 394 (TQTKSEDQSQEQLNEEKGGRQHCEDGDKPIESGSEKATVL) are disordered. A Glycyl lysine isopeptide (Lys-Gly) (interchain with G-Cter in SUMO2) cross-link involves residue Lys358. Residues 368–388 (NEEKGGRQHCEDGDKPIESGS) are compositionally biased toward basic and acidic residues. Glycyl lysine isopeptide (Lys-Gly) (interchain with G-Cter in SUMO2) cross-links involve residues Lys390 and Lys428. Residues 464-484 (PSPALQPNTEKESTANLPPQA) form a disordered region. Residue Lys518 forms a Glycyl lysine isopeptide (Lys-Gly) (interchain with G-Cter in SUMO2) linkage. Ser652 bears the Phosphoserine mark. Residues 656–694 (VCENLQRESSNKTVTQQSTSDSDTTSPLRKESSNSDSLL) are disordered. A compositionally biased stretch (low complexity) spans 670–681 (TQQSTSDSDTTS). Glycyl lysine isopeptide (Lys-Gly) (interchain with G-Cter in SUMO2) cross-links involve residues Lys707, Lys792, Lys882, Lys895, Lys987, Lys1008, Lys1041, Lys1055, Lys1078, Lys1180, and Lys1441. The C2H2-type 5 zinc-finger motif lies at 1444 to 1466 (FNCWFCGRVFDNQDVWAGHGQRH).

Belongs to the krueppel C2H2-type zinc-finger protein family.

Its subcellular location is the nucleus. Functionally, through its association with the EHMT1-EHMT2/G9A and PRC2/EED-EZH2 histone methyltransferase complexes may function in gene silencing, regulating repressive post-translational methylation of histone tails at promoters of target genes. This chain is Zinc finger protein 518A (Znf518a), found in Rattus norvegicus (Rat).